We begin with the raw amino-acid sequence, 165 residues long: Cyclic pyranopterin monophosphate synthase (165 aa).

Residues leucine 76 to histidine 78 and methionine 114 to glutamate 115 contribute to the substrate site. Aspartate 129 is a catalytic residue.

The protein belongs to the MoaC family. Homohexamer; trimer of dimers.

It carries out the reaction (8S)-3',8-cyclo-7,8-dihydroguanosine 5'-triphosphate = cyclic pyranopterin phosphate + diphosphate. It participates in cofactor biosynthesis; molybdopterin biosynthesis. Functionally, catalyzes the conversion of (8S)-3',8-cyclo-7,8-dihydroguanosine 5'-triphosphate to cyclic pyranopterin monophosphate (cPMP). In Brucella melitensis biotype 2 (strain ATCC 23457), this protein is Cyclic pyranopterin monophosphate synthase.